We begin with the raw amino-acid sequence, 183 residues long: UPF0134 protein MPN_100 (183 aa).

It belongs to the UPF0134 family.

The polypeptide is UPF0134 protein MPN_100 (Mycoplasma pneumoniae (strain ATCC 29342 / M129 / Subtype 1) (Mycoplasmoides pneumoniae)).